The following is a 371-amino-acid chain: Bifunctional enzyme IspD/IspF (371 aa).

The tract at residues 1 to 214 (MNSCFIILAG…NSDIKFNNLI (214 aa)) is 2-C-methyl-D-erythritol 4-phosphate cytidylyltransferase. Residues 215–371 (KFGIGFDVHR…EVIASVIKND (157 aa)) are 2-C-methyl-D-erythritol 2,4-cyclodiphosphate synthase. A divalent metal cation contacts are provided by Asp-221 and His-223. Residues 221-223 (DVH) and 247-248 (HS) each bind 4-CDP-2-C-methyl-D-erythritol 2-phosphate. His-255 is an a divalent metal cation binding site. Residues 269–271 (DIG), 274–278 (FSDKN), and Lys-355 contribute to the 4-CDP-2-C-methyl-D-erythritol 2-phosphate site.

The protein in the N-terminal section; belongs to the IspD/TarI cytidylyltransferase family. IspD subfamily. In the C-terminal section; belongs to the IspF family. A divalent metal cation serves as cofactor.

The enzyme catalyses 2-C-methyl-D-erythritol 4-phosphate + CTP + H(+) = 4-CDP-2-C-methyl-D-erythritol + diphosphate. It carries out the reaction 4-CDP-2-C-methyl-D-erythritol 2-phosphate = 2-C-methyl-D-erythritol 2,4-cyclic diphosphate + CMP. It functions in the pathway isoprenoid biosynthesis; isopentenyl diphosphate biosynthesis via DXP pathway; isopentenyl diphosphate from 1-deoxy-D-xylulose 5-phosphate: step 2/6. It participates in isoprenoid biosynthesis; isopentenyl diphosphate biosynthesis via DXP pathway; isopentenyl diphosphate from 1-deoxy-D-xylulose 5-phosphate: step 4/6. Functionally, bifunctional enzyme that catalyzes the formation of 4-diphosphocytidyl-2-C-methyl-D-erythritol from CTP and 2-C-methyl-D-erythritol 4-phosphate (MEP) (IspD), and catalyzes the conversion of 4-diphosphocytidyl-2-C-methyl-D-erythritol 2-phosphate (CDP-ME2P) to 2-C-methyl-D-erythritol 2,4-cyclodiphosphate (ME-CPP) with a corresponding release of cytidine 5-monophosphate (CMP) (IspF). The chain is Bifunctional enzyme IspD/IspF from Pelagibacter ubique (strain HTCC1062).